Here is a 583-residue protein sequence, read N- to C-terminus: ATP-dependent lipid A-core flippase (583 aa).

6 helical membrane-spanning segments follow: residues 32 to 52 (VAFL…TGFL), 71 to 91 (LHLL…AGFI), 115 to 135 (LMSL…TSKL), 160 to 180 (ILGM…IFAV), 259 to 279 (SMVV…YAVG), and 286 to 306 (FAAF…LTSL). One can recognise an ABC transmembrane type-1 domain in the interval 34 to 312 (FLISIIALVT…LTSLNEELQV (279 aa)). The region spanning 344 to 580 (IVFENVTLQY…DGHYAKLYRK (237 aa)) is the ABC transporter domain. 378-385 (GRSGGGKT) provides a ligand contact to ATP.

This sequence belongs to the ABC transporter superfamily. Lipid exporter (TC 3.A.1.106) family. Homodimer.

Its subcellular location is the cell inner membrane. The catalysed reaction is ATP + H2O + lipid A-core oligosaccharideSide 1 = ADP + phosphate + lipid A-core oligosaccharideSide 2.. Functionally, involved in lipopolysaccharide (LPS) biosynthesis. Translocates lipid A-core from the inner to the outer leaflet of the inner membrane. Transmembrane domains (TMD) form a pore in the inner membrane and the ATP-binding domain (NBD) is responsible for energy generation. The polypeptide is ATP-dependent lipid A-core flippase (Methylobacillus flagellatus (strain ATCC 51484 / DSM 6875 / VKM B-1610 / KT)).